We begin with the raw amino-acid sequence, 255 residues long: U2 small nuclear ribonucleoprotein A' (255 aa).

4 LRR repeats span residues Arg20 to Leu41, Gln43 to Arg64, Arg65 to Ala86, and Cys89 to Ala110. Positions Asn123–Met161 constitute an LRRCT domain. Lys172 bears the N6-acetyllysine; alternate mark. Residue Lys172 forms a Glycyl lysine isopeptide (Lys-Gly) (interchain with G-Cter in SUMO2); alternate linkage. Residues Ser178 and Ser197 each carry the phosphoserine modification. Residues Lys179–Gly199 are disordered. A Glycyl lysine isopeptide (Lys-Gly) (interchain with G-Cter in SUMO2) cross-link involves residue Lys221. The tract at residues Gly222–Ser255 is disordered. Residues Ser236 and Ser255 each carry the phosphoserine modification. A compositionally biased stretch (acidic residues) spans Asp240–Ser255.

It belongs to the U2 small nuclear ribonucleoprotein A family. Identified in the spliceosome B complex. Identified in the spliceosome C complex. Found in a pre-mRNA splicing complex with SFRS4, SFRS5, SNRNP70, SNRPA1, SRRM1 and SRRM2. Found in a pre-mRNA exonic splicing enhancer (ESE) complex with SNRNP70, SNRPA1, SRRM1 and TRA2B. Contributes to the binding of stem loop IV of U2 snRNA with SNRPB2.

The protein localises to the nucleus. Functionally, involved in pre-mRNA splicing as component of the spliceosome. Associated with sn-RNP U2, where it contributes to the binding of stem loop IV of U2 snRNA. The sequence is that of U2 small nuclear ribonucleoprotein A' (Snrpa1) from Mus musculus (Mouse).